An 86-amino-acid polypeptide reads, in one-letter code: Neuropeptide-like 3 (86 aa).

The signal sequence occupies residues 1–16 (MFKLCVFVALLSLAAA). Propeptides lie at residues 17-50 (APAP…VAPQ) and 63-75 (AITQ…LLIK). At I85 the chain carries Isoleucine amide.

Its subcellular location is the secreted. The sequence is that of Neuropeptide-like 3 (Nplp3) from Drosophila yakuba (Fruit fly).